The following is a 460-amino-acid chain: Probable amino acid transporter skat-1 (460 aa).

10 consecutive transmembrane segments (helical) span residues 64–84 (LGGL…NWYG), 132–152 (FVNV…ILFI), 172–192 (MILM…FTEM), 194–214 (IVSF…AVIM), 236–256 (TITM…ILPI), 270–290 (FGVL…LGFF), 316–336 (VNVF…YVVY), 362–382 (GFRV…PKLE), 383–403 (IMIP…FPPF), and 426–446 (IFIN…GVYT).

This sequence belongs to the amino acid/polyamine transporter 2 family. Expressed in the head, tail, body and ventral nerve cord neurons, muscles of the vulva, and intestine.

The protein localises to the membrane. It localises to the cytoplasmic granule. In terms of biological role, plays a role in the accumulation of vital dyes and endogenous fluorescent compounds in lysosome related organelles. Has an effect on lysosome related organelle (LRO) function, in a pathway with serotonin. This Caenorhabditis elegans protein is Probable amino acid transporter skat-1.